The chain runs to 452 residues: UDP-N-acetylmuramoylalanine--D-glutamate ligase (452 aa).

ATP is bound at residue 119–125; the sequence is GSNGKTT.

The protein belongs to the MurCDEF family.

It localises to the cytoplasm. It carries out the reaction UDP-N-acetyl-alpha-D-muramoyl-L-alanine + D-glutamate + ATP = UDP-N-acetyl-alpha-D-muramoyl-L-alanyl-D-glutamate + ADP + phosphate + H(+). The protein operates within cell wall biogenesis; peptidoglycan biosynthesis. Functionally, cell wall formation. Catalyzes the addition of glutamate to the nucleotide precursor UDP-N-acetylmuramoyl-L-alanine (UMA). This Streptococcus pyogenes serotype M4 (strain MGAS10750) protein is UDP-N-acetylmuramoylalanine--D-glutamate ligase.